Consider the following 343-residue polypeptide: Phosphoribosylformylglycinamidine cyclo-ligase (343 aa).

The protein belongs to the AIR synthase family.

It localises to the cytoplasm. It catalyses the reaction 2-formamido-N(1)-(5-O-phospho-beta-D-ribosyl)acetamidine + ATP = 5-amino-1-(5-phospho-beta-D-ribosyl)imidazole + ADP + phosphate + H(+). It functions in the pathway purine metabolism; IMP biosynthesis via de novo pathway; 5-amino-1-(5-phospho-D-ribosyl)imidazole from N(2)-formyl-N(1)-(5-phospho-D-ribosyl)glycinamide: step 2/2. In Enterococcus faecalis (strain ATCC 700802 / V583), this protein is Phosphoribosylformylglycinamidine cyclo-ligase.